A 1657-amino-acid polypeptide reads, in one-letter code: Thrombospondin type-1 domain-containing protein 7A (1657 aa).

The signal sequence occupies residues methionine 1 to alanine 47. Topologically, residues alanine 48–tryptophan 1607 are extracellular. 3 TSP type-1 domains span residues threonine 57–aspartate 116, glutamate 120–glutamine 192, and aspartate 194–glutamate 247. Asparagine 234 carries N-linked (GlcNAc...) asparagine glycosylation. The segment at methionine 265–arginine 311 is disordered. The stretch at histidine 267–lysine 315 forms a coiled coil. Over residues arginine 269–asparagine 280 the composition is skewed to basic residues. Residues lysine 281–leucine 299 show a composition bias toward basic and acidic residues. A compositionally biased stretch (basic residues) spans isoleucine 300–glutamine 309. Asparagine 332 carries an N-linked (GlcNAc...) asparagine glycan. TSP type-1 domains follow at residues glutamate 360–glycine 416, alanine 423–proline 510, glutamate 512–tyrosine 574, aspartate 634–threonine 695, valine 696–lysine 769, aspartate 771–glutamine 831, serine 832–glutamine 904, aspartate 906–aspartate 959, lysine 960–proline 1033, aspartate 1035–asparagine 1095, glutamine 1096–proline 1163, cysteine 1166–tyrosine 1220, histidine 1221–proline 1284, asparagine 1286–tyrosine 1341, arginine 1342–proline 1412, and aspartate 1414–tyrosine 1475. 3 cysteine pairs are disulfide-bonded: cysteine 435–cysteine 505, cysteine 455–cysteine 509, and cysteine 466–cysteine 494. Asparagine 450 carries N-linked (GlcNAc...) asparagine glycosylation. An N-linked (GlcNAc...) asparagine glycan is attached at asparagine 500. 2 cysteine pairs are disulfide-bonded: cysteine 635–cysteine 677 and cysteine 646–cysteine 650. N-linked (GlcNAc...) asparagine glycosylation occurs at asparagine 679. Disulfide bonds link cysteine 689/cysteine 694, cysteine 707/cysteine 764, cysteine 728/cysteine 768, cysteine 739/cysteine 752, cysteine 772/cysteine 814, cysteine 783/cysteine 787, and cysteine 824/cysteine 830. The N-linked (GlcNAc...) asparagine glycan is linked to asparagine 717. N-linked (GlcNAc...) asparagine glycosylation is present at asparagine 968. 6 disulfide bridges follow: cysteine 972–cysteine 1028, cysteine 994–cysteine 1032, cysteine 1005–cysteine 1018, cysteine 1036–cysteine 1073, cysteine 1047–cysteine 1051, and cysteine 1090–cysteine 1094. Asparagine 1043 carries N-linked (GlcNAc...) asparagine glycosylation. Asparagine 1182 carries N-linked (GlcNAc...) asparagine glycosylation. Cysteine 1213 and cysteine 1219 form a disulfide bridge. Asparagine 1225 carries an N-linked (GlcNAc...) asparagine glycan. 12 disulfide bridges follow: cysteine 1232-cysteine 1279, cysteine 1240-cysteine 1283, cysteine 1251-cysteine 1264, cysteine 1287-cysteine 1325, cysteine 1298-cysteine 1302, cysteine 1335-cysteine 1340, cysteine 1351-cysteine 1407, cysteine 1358-cysteine 1411, cysteine 1369-cysteine 1388, cysteine 1415-cysteine 1459, cysteine 1426-cysteine 1430, and cysteine 1469-cysteine 1474. Asparagine 1276 carries an N-linked (GlcNAc...) asparagine glycan. The N-linked (GlcNAc...) asparagine glycan is linked to asparagine 1366. 2 N-linked (GlcNAc...) asparagine glycosylation sites follow: asparagine 1500 and asparagine 1547. A disordered region spans residues aspartate 1570 to arginine 1591. Residues valine 1608–leucine 1628 traverse the membrane as a helical segment. Residues alanine 1629–methionine 1657 are Cytoplasmic-facing.

Post-translationally, proteolytic cleavage in the extracellular region generates a 210 kDa soluble form. In terms of processing, extensively N-glycosylated. As to expression, detected on kidney podocytes along the glomerular capillary wall (at protein level).

It is found in the cell membrane. The protein localises to the cell projection. Its subcellular location is the secreted. In terms of biological role, plays a role in actin cytoskeleton rearrangement. Functionally, the soluble form promotes endothelial cell migration and filopodia formation during sprouting angiogenesis via a FAK-dependent mechanism. This is Thrombospondin type-1 domain-containing protein 7A (THSD7A) from Homo sapiens (Human).